A 413-amino-acid polypeptide reads, in one-letter code: von Willebrand factor A domain-containing protein 1 (413 aa).

Residues 1–20 (MLPWTVIGLALSLRLARSGA) form the signal peptide. Positions 32–211 (DLLFLLDSSA…ALRGSILDAM (180 aa)) constitute a VWFA domain. Ser72, Ser78, and Ser91 each carry phosphoserine. Fibronectin type-III domains lie at 212 to 302 (WPQQ…TLPE) and 305 to 395 (GPEL…TPEG). The N-linked (GlcNAc...) asparagine glycan is linked to Asn262. The interval 385–413 (ALSAKACTPEGERSRAPRPQPQRTGGREP) is disordered.

In terms of assembly, homodimer or homomultimer; disulfide-linked. Interacts with HSPG2. Post-translationally, N-glycosylated.

The protein localises to the secreted. The protein resides in the extracellular space. It localises to the extracellular matrix. Its subcellular location is the basement membrane. Functionally, promotes matrix assembly. Involved in the organization of skeletal muscles and in the formation of neuromuscular junctions. This chain is von Willebrand factor A domain-containing protein 1 (VWA1), found in Bos taurus (Bovine).